Reading from the N-terminus, the 331-residue chain is Meiotic recombination protein W68 (331 aa).

A Topo IIA-type catalytic domain is found at 1–120 (MDEFSENIER…LGILAASKGL (120 aa)). Tyr-81 (O-(5'-phospho-DNA)-tyrosine intermediate) is an active-site residue. Glu-167 and Asp-221 together coordinate Mg(2+).

This sequence belongs to the TOP6A family. The cofactor is Mg(2+).

Its subcellular location is the nucleus. The catalysed reaction is ATP-dependent breakage, passage and rejoining of double-stranded DNA.. In terms of biological role, required for meiotic recombination. Together with mei-P22, mediates DNA cleavage that forms the double-strand breaks (DSB) that initiate meiotic recombination. The protein is Meiotic recombination protein W68 of Drosophila melanogaster (Fruit fly).